Consider the following 151-residue polypeptide: Deoxyuridine 5'-triphosphate nucleotidohydrolase (151 aa).

Substrate-binding positions include 70 to 72, asparagine 83, 87 to 89, and methionine 97; these read RSG and LID.

It belongs to the dUTPase family. It depends on Mg(2+) as a cofactor.

The catalysed reaction is dUTP + H2O = dUMP + diphosphate + H(+). It functions in the pathway pyrimidine metabolism; dUMP biosynthesis; dUMP from dCTP (dUTP route): step 2/2. This enzyme is involved in nucleotide metabolism: it produces dUMP, the immediate precursor of thymidine nucleotides and it decreases the intracellular concentration of dUTP so that uracil cannot be incorporated into DNA. In Psychromonas ingrahamii (strain DSM 17664 / CCUG 51855 / 37), this protein is Deoxyuridine 5'-triphosphate nucleotidohydrolase.